Here is a 62-residue protein sequence, read N- to C-terminus: Potassium channel toxin kappa-KTx 1.4 (62 aa).

Residues Met-1–Ala-26 form the signal peptide. Positions Glu-27 to Glu-38 are excised as a propeptide. 2 disulfide bridges follow: Cys-43–Cys-61 and Cys-47–Cys-57.

This sequence belongs to the short scorpion toxin superfamily. Potassium channel inhibitor kappa-KTx family. Kappa-KTx 1 subfamily. In terms of tissue distribution, expressed by the venom gland.

The protein resides in the secreted. Its function is as follows. Shows structural homology with WaTx suggesting that it acts as a cell-penetrating peptide (CPP) with defensive purpose that induces pain by specifically activating mammalian sensory neuron TRPA1 channels. Has no effect on the voltage-gated potassium channels tested. The polypeptide is Potassium channel toxin kappa-KTx 1.4 (Heterometrus petersii (Asian forest scorpion)).